The sequence spans 379 residues: Cytochrome-c peroxidase IdrP1 (379 aa).

The N-terminal stretch at 1–24 (MNNRKPLQLSLLVASLAVAFTASA) is a signal peptide. Cytochrome c domains are found at residues 50 to 158 (EKIA…DAFK) and 204 to 355 (TSQK…EALS). Cys-72, Cys-75, His-76, Cys-219, Cys-222, and His-223 together coordinate heme c.

The iodate reductase (Idr) complex is composed of a molybdopterin-dependent iodate reductase (IdrA and IdrB subunits) and two associated peroxidases (IdrP1 and IdrP2). It depends on heme c as a cofactor.

The protein localises to the periplasm. It carries out the reaction 2 Fe(II)-[cytochrome c] + H2O2 + 2 H(+) = 2 Fe(III)-[cytochrome c] + 2 H2O. Involved in iodate respiration. Probably reduces the H(2)O(2) produced by IdrA/IdrB to H(2)O, using a reduced cytochrome c as the electron donor. The protein is Cytochrome-c peroxidase IdrP1 of Pseudomonas sp. (strain SCT).